Consider the following 762-residue polypeptide: uncharacterized protein (762 aa).

Residues 334-542 (IIDILSNYLI…SDEEIAEHIL (209 aa)) form the MCM domain. 384–391 (TDPGIGKS) lines the ATP pocket.

The protein belongs to the MCM family.

This is an uncharacterized protein from Methanocaldococcus jannaschii (strain ATCC 43067 / DSM 2661 / JAL-1 / JCM 10045 / NBRC 100440) (Methanococcus jannaschii).